The primary structure comprises 394 residues: Alanine racemase 2 (394 aa).

Residue Lys39 is the Proton acceptor; specific for D-alanine of the active site. At Lys39 the chain carries N6-(pyridoxal phosphate)lysine. Position 139 (Arg139) interacts with substrate. The Proton acceptor; specific for L-alanine role is filled by Tyr272. Met320 provides a ligand contact to substrate.

This sequence belongs to the alanine racemase family. Requires pyridoxal 5'-phosphate as cofactor.

It catalyses the reaction L-alanine = D-alanine. Its pathway is amino-acid biosynthesis; D-alanine biosynthesis; D-alanine from L-alanine: step 1/1. Its function is as follows. Catalyzes the interconversion of L-alanine and D-alanine. May also act on other amino acids. The protein is Alanine racemase 2 (alr2) of Bacillus subtilis (strain 168).